A 238-amino-acid chain; its full sequence is Chloride intracellular channel exl-1 (238 aa).

It belongs to the chloride channel CLIC family. In terms of tissue distribution, expressed in the intestine, neurons and muscles.

The protein resides in the cytoplasm. It localises to the membrane. Its subcellular location is the lysosome membrane. It is found in the golgi apparatus membrane. In terms of biological role, probable chloride channel. This chain is Chloride intracellular channel exl-1 (exl-1), found in Caenorhabditis elegans.